Reading from the N-terminus, the 358-residue chain is MTEAIGDEPLGDHVLELQIAEVVDETDEARSLVFAVPDGSDDPEIPPRRLRYAPGQFLTLRVPSERTGSVARCYSLCSSPYTDDALAVTVKRTADGYASNWLCDHAQVGMRIHVLAPSGNFVPTTLDADFLLLAAGSGITPIMSICKSALAEGGGQVTLLYANRDDRSVIFGDALRELAAKYPDRLTVLHWLESLQGLPSASALAKLVAPYTDRPVFICGPGPFMQAARDALAALKVPAQQVHIEVFKSLESDPFAAVKVDDSGDEAPATAVVELDGQTHTVSWPRTAKLLDVLLAAGLDAPFSCREGHCGACACTLRAGKVNMGVNDVLEQQDLDEGLILACQSRPESDSVEVTYDE.

In terms of domain architecture, FAD-binding FR-type spans 12-124 (DHVLELQIAE…LAPSGNFVPT (113 aa)). In terms of domain architecture, 2Fe-2S ferredoxin-type spans 269–358 (ATAVVELDGQ…SDSVEVTYDE (90 aa)). Residues C305, C310, C313, and C343 each coordinate [2Fe-2S] cluster.

Monomer. The two-component system 3-ketosteroid-9-alpha-monooxygenase is composed of an oxygenase component KshA and a reductase component KshB. The cofactor is FAD. [2Fe-2S] cluster is required as a cofactor.

The enzyme catalyses androsta-1,4-diene-3,17-dione + 2 reduced [2Fe-2S]-[ferredoxin] + O2 + 2 H(+) = 9alpha-hydroxyandrosta-1,4-diene-3,17-dione + 2 oxidized [2Fe-2S]-[ferredoxin] + H2O. Its pathway is lipid metabolism; steroid biosynthesis. Involved in the degradation of cholesterol. Catalyzes the introduction of a 9a-hydroxyl moiety into 1,4-androstadiene-3,17-dione (ADD) to yield the 9alpha-hydroxy-1,4-androstadiene-3,17-dione (9OHADD) intermediate which spontaneously form 3-hydroxy-9,10-seconandrost-1,3,5(10)-triene-9,17-dione (HSA) via the meta-cleavage of ring B with concomitant aromatization of ring A. The polypeptide is 3-ketosteroid-9-alpha-monooxygenase, ferredoxin reductase component (hmp) (Mycobacterium tuberculosis (strain CDC 1551 / Oshkosh)).